We begin with the raw amino-acid sequence, 475 residues long: Aspartyl/glutamyl-tRNA(Asn/Gln) amidotransferase subunit B (475 aa).

This sequence belongs to the GatB/GatE family. GatB subfamily. As to quaternary structure, heterotrimer of A, B and C subunits.

The enzyme catalyses L-glutamyl-tRNA(Gln) + L-glutamine + ATP + H2O = L-glutaminyl-tRNA(Gln) + L-glutamate + ADP + phosphate + H(+). The catalysed reaction is L-aspartyl-tRNA(Asn) + L-glutamine + ATP + H2O = L-asparaginyl-tRNA(Asn) + L-glutamate + ADP + phosphate + 2 H(+). Functionally, allows the formation of correctly charged Asn-tRNA(Asn) or Gln-tRNA(Gln) through the transamidation of misacylated Asp-tRNA(Asn) or Glu-tRNA(Gln) in organisms which lack either or both of asparaginyl-tRNA or glutaminyl-tRNA synthetases. The reaction takes place in the presence of glutamine and ATP through an activated phospho-Asp-tRNA(Asn) or phospho-Glu-tRNA(Gln). The protein is Aspartyl/glutamyl-tRNA(Asn/Gln) amidotransferase subunit B of Chlorobaculum tepidum (strain ATCC 49652 / DSM 12025 / NBRC 103806 / TLS) (Chlorobium tepidum).